The sequence spans 20 residues: M-poneritoxin-Ng1f (20 aa).

K20 carries the lysine amide modification.

In terms of tissue distribution, expressed by the venom gland.

It localises to the secreted. The protein resides in the target cell membrane. In terms of biological role, has activity against Gram-positive bacteria. Has insecticidal and hemolytic activities. May act by disrupting the integrity of the bacterial cell membrane. This chain is M-poneritoxin-Ng1f, found in Neoponera goeldii (Ponerine ant).